The chain runs to 213 residues: Kynurenine formamidase (213 aa).

Substrate is bound at residue Trp18. His48, His52, and Asp54 together coordinate Zn(2+). The active-site Proton donor/acceptor is the His58. Residues His160 and Glu172 each coordinate Zn(2+).

The protein belongs to the Cyclase 1 superfamily. KynB family. In terms of assembly, homodimer. Zn(2+) is required as a cofactor.

The enzyme catalyses N-formyl-L-kynurenine + H2O = L-kynurenine + formate + H(+). It participates in amino-acid degradation; L-tryptophan degradation via kynurenine pathway; L-kynurenine from L-tryptophan: step 2/2. Its function is as follows. Catalyzes the hydrolysis of N-formyl-L-kynurenine to L-kynurenine, the second step in the kynurenine pathway of tryptophan degradation. This chain is Kynurenine formamidase, found in Burkholderia cenocepacia (strain ATCC BAA-245 / DSM 16553 / LMG 16656 / NCTC 13227 / J2315 / CF5610) (Burkholderia cepacia (strain J2315)).